A 293-amino-acid polypeptide reads, in one-letter code: 4-hydroxy-tetrahydrodipicolinate synthase (293 aa).

Thr44 is a pyruvate binding site. Tyr132 functions as the Proton donor/acceptor in the catalytic mechanism. The active-site Schiff-base intermediate with substrate is Lys161. Pyruvate is bound at residue Ile203.

The protein belongs to the DapA family. In terms of assembly, homotetramer; dimer of dimers.

Its subcellular location is the cytoplasm. The enzyme catalyses L-aspartate 4-semialdehyde + pyruvate = (2S,4S)-4-hydroxy-2,3,4,5-tetrahydrodipicolinate + H2O + H(+). It participates in amino-acid biosynthesis; L-lysine biosynthesis via DAP pathway; (S)-tetrahydrodipicolinate from L-aspartate: step 3/4. In terms of biological role, catalyzes the condensation of (S)-aspartate-beta-semialdehyde [(S)-ASA] and pyruvate to 4-hydroxy-tetrahydrodipicolinate (HTPA). The polypeptide is 4-hydroxy-tetrahydrodipicolinate synthase (Persephonella marina (strain DSM 14350 / EX-H1)).